A 263-amino-acid polypeptide reads, in one-letter code: Non-homologous end joining protein Ku 3 (263 aa).

The Ku domain maps to 6–169; sequence FGLVSVPVQL…WADEVRDPHR (164 aa).

The protein belongs to the prokaryotic Ku family. As to quaternary structure, homodimer. Interacts with LigD.

With LigD forms a non-homologous end joining (NHEJ) DNA repair enzyme, which repairs dsDNA breaks with reduced fidelity. Binds linear dsDNA with 5'- and 3'- overhangs but not closed circular dsDNA nor ssDNA. Recruits and stimulates the ligase activity of LigD. In Saccharopolyspora erythraea (strain ATCC 11635 / DSM 40517 / JCM 4748 / NBRC 13426 / NCIMB 8594 / NRRL 2338), this protein is Non-homologous end joining protein Ku 3.